A 71-amino-acid chain; its full sequence is Protein MTH_1184 (71 aa).

This chain is Protein MTH_1184, found in Methanothermobacter thermautotrophicus (strain ATCC 29096 / DSM 1053 / JCM 10044 / NBRC 100330 / Delta H) (Methanobacterium thermoautotrophicum).